The following is a 773-amino-acid chain: Tyrosine kinase receptor Cad96Ca (773 aa).

The N-terminal stretch at 1-48 (MVYHHHNHESRIIHCRKQLTSWRRRSLLLTIIVVTATVVSLISQEAEA) is a signal peptide. Residues 49-315 (HNQNAPPILY…ITIFSLKSGT (267 aa)) lie on the Extracellular side of the membrane. The Cadherin domain maps to 58–172 (YVRERNWRIS…ENSSGYRPQT (115 aa)). N-linked (GlcNAc...) asparagine glycans are attached at residues N126, N164, and N180. Residues 196–302 (SIRNGLPNSR…TPSGGHHNNS (107 aa)) form a disordered region. Positions 209 to 235 (WYPPVPQNNIFGPPPFGNNYPPPPPNI) are enriched in pro residues. Acidic residues predominate over residues 243–253 (SGEEEQPDEEV). Polar residues-rich tracts occupy residues 254 to 283 (TPTTPVRISSTTPKSRTKLTPITANNSTRV) and 290 to 302 (ETTTPSGGHHNNS). N-linked (GlcNAc...) asparagine glycosylation is found at N278, N279, N300, and N301. A helical membrane pass occupies residues 316-336 (IPIVVTVGGFFVAIAVLLAYL). Residues 337 to 773 (CRRRLCAISR…NIVSLSGEKL (437 aa)) lie on the Cytoplasmic side of the membrane. Disordered regions lie at residues 352–373 (KEKEELAKKSNQSQLSSTLTDD) and 411–447 (TGVTNGGVSSPGVPSPGTGEPGSNLGPGCLTGGAGSS). Polar residues predominate over residues 361-373 (SNQSQLSSTLTDD). Residues 411-433 (TGVTNGGVSSPGVPSPGTGEPGS) show a composition bias toward low complexity. Residues 470-749 (LKFFNILGEG…MLDKLLHTEM (280 aa)) form the Protein kinase domain. ATP-binding positions include 476-484 (LGEGAFGQV) and K504. D610 functions as the Proton acceptor in the catalytic mechanism.

Belongs to the protein kinase superfamily. Tyr protein kinase family. Fibroblast growth factor receptor subfamily.

The protein localises to the membrane. It catalyses the reaction L-tyrosyl-[protein] + ATP = O-phospho-L-tyrosyl-[protein] + ADP + H(+). The protein is Tyrosine kinase receptor Cad96Ca (Cad96Ca) of Drosophila melanogaster (Fruit fly).